A 350-amino-acid chain; its full sequence is ALA-interacting subunit 5 (350 aa).

Residues 1–23 (MSSTAASSTVGGGGSSEISGVKK) are disordered. Ser2 bears the N-acetylserine mark. A helical transmembrane segment spans residues 50–70 (VILTFLVAGVVFIPLGVICLF). 2 N-linked (GlcNAc...) asparagine glycosylation sites follow: Asn181 and Asn231. The helical transmembrane segment at 304–324 (FLGIAYLTVGSICLFLAVTFA) threads the bilayer.

The protein belongs to the CDC50/LEM3 family. Interacts with ALA2 and ALA3 in a heterologous system. In terms of tissue distribution, expressed in roots, leaves, stems, flowers and siliques.

It is found in the golgi apparatus membrane. The protein localises to the prevacuolar compartment membrane. Its subcellular location is the endoplasmic reticulum membrane. Required for the lipid transport activity of the ALA/ALIS P4-ATPase complex. The sequence is that of ALA-interacting subunit 5 (ALIS5) from Arabidopsis thaliana (Mouse-ear cress).